Here is a 287-residue protein sequence, read N- to C-terminus: tRNA selenocysteine 1-associated protein 1 (287 aa).

2 consecutive RRM domains span residues 3–86 and 96–175; these read ASLW…YATY and YSLF…VAIP.

This sequence belongs to the RRM TRSPAP family. In terms of assembly, component of the tRNA(Sec) complex composed at least of EEFSEC, SECISBP2, SEPHS1, SEPSECS, TRNAU1AP and tRNA(Sec). Found in a complex with tRNA(Sec). Interacts with SEPSECS. Associates with mRNP and/or polysomes. Found in a complex with EEFSEC, SECISBP2, TRNAU1AP and tRNA(Sec).

The protein localises to the nucleus. Its subcellular location is the cytoplasm. Involved in the early steps of selenocysteine biosynthesis and tRNA(Sec) charging to the later steps resulting in the cotranslational incorporation of selenocysteine into selenoproteins. Stabilizes the SECISBP2, EEFSEC and tRNA(Sec) complex. May be involved in the methylation of tRNA(Sec). Enhances efficiency of selenoproteins synthesis. The sequence is that of tRNA selenocysteine 1-associated protein 1 (TRNAU1AP) from Homo sapiens (Human).